The sequence spans 102 residues: Small ribosomal subunit protein uS10 (102 aa).

It belongs to the universal ribosomal protein uS10 family. As to quaternary structure, part of the 30S ribosomal subunit.

In terms of biological role, involved in the binding of tRNA to the ribosomes. This is Small ribosomal subunit protein uS10 from Beijerinckia indica subsp. indica (strain ATCC 9039 / DSM 1715 / NCIMB 8712).